Consider the following 191-residue polypeptide: Peptidyl-tRNA hydrolase (191 aa).

Tyr-14 contributes to the tRNA binding site. The active-site Proton acceptor is His-19. 3 residues coordinate tRNA: Phe-64, Asn-66, and Asn-112.

Belongs to the PTH family. Monomer.

It is found in the cytoplasm. It carries out the reaction an N-acyl-L-alpha-aminoacyl-tRNA + H2O = an N-acyl-L-amino acid + a tRNA + H(+). Functionally, hydrolyzes ribosome-free peptidyl-tRNAs (with 1 or more amino acids incorporated), which drop off the ribosome during protein synthesis, or as a result of ribosome stalling. In terms of biological role, catalyzes the release of premature peptidyl moieties from peptidyl-tRNA molecules trapped in stalled 50S ribosomal subunits, and thus maintains levels of free tRNAs and 50S ribosomes. This Novosphingobium aromaticivorans (strain ATCC 700278 / DSM 12444 / CCUG 56034 / CIP 105152 / NBRC 16084 / F199) protein is Peptidyl-tRNA hydrolase.